The following is a 217-amino-acid chain: Putative peroxiredoxin Q, chloroplastic (217 aa).

A chloroplast-targeting transit peptide spans 1-66 (MAFAVSTACR…PSTTGRNRIV (66 aa)). In terms of domain architecture, Thioredoxin spans 70–217 (VSKGSAAPNF…GETLKILQSL (148 aa)). The Cysteine sulfenic acid (-SOH) intermediate role is filled by Cys-112. Residues Cys-112 and Cys-117 are joined by a disulfide bond.

The protein belongs to the peroxiredoxin family. BCP/PrxQ subfamily. As to quaternary structure, monomer.

Its subcellular location is the plastid. The protein resides in the chloroplast thylakoid lumen. The enzyme catalyses a hydroperoxide + [thioredoxin]-dithiol = an alcohol + [thioredoxin]-disulfide + H2O. In terms of biological role, thiol-specific peroxidase that catalyzes the reduction of hydrogen peroxide and organic hydroperoxides to water and alcohols, respectively. Plays a role in cell protection against oxidative stress by detoxifying peroxides. The sequence is that of Putative peroxiredoxin Q, chloroplastic from Oryza sativa subsp. indica (Rice).